We begin with the raw amino-acid sequence, 658 residues long: DNA mismatch repair protein MutL (658 aa).

Residues 114 to 130 (RQEDSSHATQVKAEDGK) show a composition bias toward basic and acidic residues. Disordered regions lie at residues 114 to 138 (RQEDSSHATQVKAEDGKLSSPTAAA) and 355 to 405 (PSEN…HSLS).

It belongs to the DNA mismatch repair MutL/HexB family.

Functionally, this protein is involved in the repair of mismatches in DNA. It is required for dam-dependent methyl-directed DNA mismatch repair. May act as a 'molecular matchmaker', a protein that promotes the formation of a stable complex between two or more DNA-binding proteins in an ATP-dependent manner without itself being part of a final effector complex. The sequence is that of DNA mismatch repair protein MutL from Neisseria gonorrhoeae (strain ATCC 700825 / FA 1090).